The chain runs to 157 residues: Dihydrofolate reductase type 6 (157 aa).

Residues 2 to 156 (KISLMAAVSE…IDYTYQIWAK (155 aa)) form the DHFR domain.

It belongs to the dihydrofolate reductase family. Homodimer.

It carries out the reaction (6S)-5,6,7,8-tetrahydrofolate + NADP(+) = 7,8-dihydrofolate + NADPH + H(+). The protein operates within cofactor biosynthesis; tetrahydrofolate biosynthesis; 5,6,7,8-tetrahydrofolate from 7,8-dihydrofolate: step 1/1. Key enzyme in folate metabolism. Catalyzes an essential reaction for de novo glycine and purine synthesis, and for DNA precursor synthesis. The chain is Dihydrofolate reductase type 6 (dhfrVI) from Proteus mirabilis.